We begin with the raw amino-acid sequence, 624 residues long: (-)-beta-phellandrene synthase 2, chloroplastic (624 aa).

Residues 1 to 47 (MALVSVAPLVSMRRSLFSSPYELKSIDKTIPNLVMCRKRMLGRPSIR) constitute a chloroplast transit peptide. Residues aspartate 375, aspartate 379, and aspartate 527 each contribute to the Mg(2+) site. The DDXXD motif signature appears at 375–379 (DDIYD).

Belongs to the terpene synthase family. Tpsd subfamily. Mg(2+) serves as cofactor. The cofactor is Mn(2+).

It is found in the plastid. It localises to the chloroplast. It catalyses the reaction (2E)-geranyl diphosphate = (-)-beta-phellandrene + diphosphate. It functions in the pathway terpene metabolism; oleoresin biosynthesis. The protein operates within secondary metabolite biosynthesis; terpenoid biosynthesis. Its function is as follows. Monoterpene synthase (TPS) involved in the biosynthesis of monoterpene natural products included in conifer oleoresin secretions and volatile emissions; these compounds contribute to biotic and abiotic stress defense against herbivores and pathogens. Catalyzes the conversion of (2E)-geranyl diphosphate (GPP) to (-)-beta-phellandrene. This is (-)-beta-phellandrene synthase 2, chloroplastic from Pinus contorta (Shore pine).